We begin with the raw amino-acid sequence, 1013 residues long: Endosome/lysosome-associated apoptosis and autophagy regulator 1 (1013 aa).

The first 41 residues, 1–41 (MAEPGHSHHLSARVRGRTERRIPRLWRLLLWAGTAFQVTQG), serve as a signal peptide directing secretion. Residues 42-910 (TGPELHACKE…ICKTIDFWLK (869 aa)) are Extracellular-facing. Asn-153 carries an N-linked (GlcNAc...) asparagine glycan. Disulfide bonds link Cys-278-Cys-295, Cys-308-Cys-330, and Cys-311-Cys-342. N-linked (GlcNAc...) asparagine glycans are attached at residues Asn-404 and Asn-672. One can recognise an MRH domain in the interval 656–858 (NDCTFSRNTP…LWESAAACPL (203 aa)). Intrachain disulfides connect Cys-658-Cys-704, Cys-714-Cys-739, Cys-808-Cys-844, and Cys-820-Cys-856. The helical transmembrane segment at 911-931 (VGISAGTCTAILLTVLTCYFW) threads the bilayer. Topologically, residues 932 to 1013 (KKNQKLEYKY…TSSGGLDMDL (82 aa)) are cytoplasmic.

Belongs to the ELAPOR family. Interacts with HSPA5; may regulate the function of HSPA5 in apoptosis and cell proliferation. In terms of tissue distribution, expressed in normal endometrium but overexpressed in endometroid tumors.

The protein resides in the cell membrane. It localises to the late endosome membrane. The protein localises to the golgi apparatus. Its subcellular location is the trans-Golgi network membrane. It is found in the lysosome membrane. The protein resides in the endoplasmic reticulum membrane. May protect cells from cell death by inducing cytosolic vacuolization and up-regulating the autophagy pathway. May play a role in apoptosis and cell proliferation through its interaction with HSPA5. In Homo sapiens (Human), this protein is Endosome/lysosome-associated apoptosis and autophagy regulator 1.